The chain runs to 127 residues: Methylglyoxal synthase (127 aa).

Positions 1 to 127 (MEGQRCIALI…ENLIDFNSAD (127 aa)) constitute an MGS-like domain. Substrate contacts are provided by residues His12, Lys16, 38 to 41 (TGTT), and 59 to 60 (SG). The active-site Proton donor/acceptor is Asp65. His92 provides a ligand contact to substrate.

The protein belongs to the methylglyoxal synthase family.

The catalysed reaction is dihydroxyacetone phosphate = methylglyoxal + phosphate. Catalyzes the formation of methylglyoxal from dihydroxyacetone phosphate. The protein is Methylglyoxal synthase of Agrobacterium fabrum (strain C58 / ATCC 33970) (Agrobacterium tumefaciens (strain C58)).